The chain runs to 394 residues: NAD(P)H-quinone oxidoreductase subunit H (394 aa).

The protein belongs to the complex I 49 kDa subunit family. NDH-1 can be composed of about 15 different subunits; different subcomplexes with different compositions have been identified which probably have different functions.

It is found in the cellular thylakoid membrane. It carries out the reaction a plastoquinone + NADH + (n+1) H(+)(in) = a plastoquinol + NAD(+) + n H(+)(out). It catalyses the reaction a plastoquinone + NADPH + (n+1) H(+)(in) = a plastoquinol + NADP(+) + n H(+)(out). Its function is as follows. NDH-1 shuttles electrons from an unknown electron donor, via FMN and iron-sulfur (Fe-S) centers, to quinones in the respiratory and/or the photosynthetic chain. The immediate electron acceptor for the enzyme in this species is believed to be plastoquinone. Couples the redox reaction to proton translocation, and thus conserves the redox energy in a proton gradient. Cyanobacterial NDH-1 also plays a role in inorganic carbon-concentration. In Prochlorococcus marinus (strain NATL1A), this protein is NAD(P)H-quinone oxidoreductase subunit H.